A 43-amino-acid chain; its full sequence is Large ribosomal subunit protein bL32 (43 aa).

This sequence belongs to the bacterial ribosomal protein bL32 family.

The polypeptide is Large ribosomal subunit protein bL32 (rpmF) (Carsonella ruddii (strain PV)).